The following is a 195-amino-acid chain: Probable GTP-binding protein EngB (195 aa).

The 172-residue stretch at 24–195 (DWPEIALAGR…EAWTAILKYL (172 aa)) folds into the EngB-type G domain. GTP is bound by residues 32–39 (GRSNVGKS), 59–63 (GKTQL), 77–80 (DVPG), 144–147 (TKAD), and 176–178 (FSS). 2 residues coordinate Mg(2+): Ser39 and Thr61.

The protein belongs to the TRAFAC class TrmE-Era-EngA-EngB-Septin-like GTPase superfamily. EngB GTPase family. It depends on Mg(2+) as a cofactor.

Necessary for normal cell division and for the maintenance of normal septation. The chain is Probable GTP-binding protein EngB from Lactococcus lactis subsp. cremoris (strain MG1363).